The sequence spans 698 residues: MLDHTRAPELNIDLDLHASNSPKGSMKGNQFKEQDPCPPQPMQGLGKGDKREEQGLGPEPSAPRQPTEEEEALIEFHRSYRELFQFFCNNTTIHGAIRLVCSKHNRMKTAFWAVLWLCTFGMMYWQFALLFEEYLSYPVSLNINLNSDKLVFPAVTVCTLNPYRYTEIKEELEELDRITEQTLFDLYKYNSSYTRQAGARRRSSRDLLGAFPHPLQRLRTPPPPYSGRTARSGSSSVRDNNPQVDRKDWKIGFQLCNQNKSDCFYQTYSSGVDAVREWYRFHYINILSRLSDTSPALEEEALGNFIFTCRFNQAPCNQANYSKFHHPMYGNCYTFNDKNNSNLWMSSMPGVNNGLSLTLRTEQNDFIPLLSTVTGARVMVHGQDEPAFMDDGGFNLRPGVETSISMRKEALDSLGGNYGDCTENGSDVPVKNLYPSKYTQQVCIHSCFQENMIKKCGCAYIFYPKPKGVEFCDYRKQSSWGYCYYKLQGAFSLDSLGCFSKCRKPCSVINYKLSAGYSRWPSVKSQDWIFEMLSLQNNYTINNKRNGVAKLNIFFKELNYKTNSESPSVTMVSLLSNLGSQWSLWFGSSVLSVVEMAELIFDLLVITLLMLLRRFRSRYWSPGRGARGAREVASTPASSFPSRFCPHPTSPPPSLPQQGMTPPLALTAPPPAYATLGPSAPPLDSAAPDCSACALAAL.

The disordered stretch occupies residues 1–70 (MLDHTRAPEL…SAPRQPTEEE (70 aa)). Over 1-110 (MLDHTRAPEL…CSKHNRMKTA (110 aa)) the chain is Cytoplasmic. The chain crosses the membrane as a helical span at residues 111-131 (FWAVLWLCTFGMMYWQFALLF). Topologically, residues 132 to 589 (EEYLSYPVSL…SQWSLWFGSS (458 aa)) are extracellular. 3 disulfides stabilise this stretch: C158–C332, C256–C263, and C309–C316. An N-linked (GlcNAc...) asparagine glycan is attached at N190. Residues 200 to 270 (RRRSSRDLLG…SDCFYQTYSS (71 aa)) form a gating release of inhibition by proteolysis (GRIP); protease-sensitive region that is responsible for the proteolytic activation of the channel region. A disordered region spans residues 213–243 (HPLQRLRTPPPPYSGRTARSGSSSVRDNNPQ). Positions 229-243 (TARSGSSSVRDNNPQ) are enriched in polar residues. The N-linked (GlcNAc...) asparagine glycan is linked to N259. 3 N-linked (GlcNAc...) asparagine glycosylation sites follow: N320, N339, and N424. Cystine bridges form between C421–C506, C443–C483, C443–C502, C447–C498, C456–C483, C456–C506, and C458–C472. A glycan (N-linked (GlcNAc...) asparagine) is linked at N538. The helical transmembrane segment at 590–610 (VLSVVEMAELIFDLLVITLLM) threads the bilayer. Topologically, residues 611-698 (LLRRFRSRYW…DCSACALAAL (88 aa)) are cytoplasmic. A disordered region spans residues 637 to 663 (ASSFPSRFCPHPTSPPPSLPQQGMTPP). Residues 669–673 (PPPAY) carry the PY motif; recruits WW domain-containing proteins and is thereby required for ubiquitination and inhibition of the channel by NEDD4 and NEDD4L motif.

Belongs to the amiloride-sensitive sodium channel (TC 1.A.6) family. SCNN1A subfamily. As to quaternary structure, heterotrimer; containing an alpha/SCNN1A, a beta/SCNN1B and a gamma/SCNN1G subunit. Interacts with WWP1 (via WW domains). Interacts with WWP2 (via WW domains); inhibits the channel. Interacts with BPIFA1; the interaction is indirect via SCNN1B and inhibits the proteolytic processing of SCNN1A and SCNN1G and the activation of ENaC. Interacts with the full-length immature form of PCSK9 (pro-PCSK9). In terms of processing, ubiquitinated. Can be ubiquitinated at multiple sites and undergo monoubiquitination and polyubiquitination. Ubiquitination by NEDD4 or NEDD4L inhibits the ENaC channel through endocytosis, intracellular retention and degradation of its individual subunits. Post-translationally, N-glycosylated. ENaC is activated through the proteolytic maturation of its subunits. Furin cleaves the SCNN1A subunit, which results in a stepwise increase in the open probability of the channel due to the release of an inhibitory tract. BPIFA1, which is recruited by the SCNN1B subunit, prevents the proteolytic activation of ENaC. Detected in kidney, lung and testis (at protein level). In the testis, detected within the seminiferous tubules but not in the interstitial cells (at protein level).

It is found in the apical cell membrane. The protein resides in the cell projection. Its subcellular location is the cilium. The protein localises to the cytoplasmic granule. It localises to the cytoplasm. It is found in the cytoplasmic vesicle. The protein resides in the secretory vesicle. Its subcellular location is the acrosome. The protein localises to the flagellum. It catalyses the reaction Na(+)(in) = Na(+)(out). Its activity is regulated as follows. Originally identified and characterized by its inhibition by the diuretic drug amiloride. In terms of biological role, this is one of the three pore-forming subunits of the heterotrimeric epithelial sodium channel (ENaC), a critical regulator of sodium balance and fluid homeostasis. ENaC operates in epithelial tissues, where it mediates the electrodiffusion of sodium ions from extracellular fluid through the apical membrane of cells, with water following osmotically. It plays a key role in maintaining sodium homeostasis through electrogenic sodium reabsorption in the kidneys. Additionally, ENaC is essential for airway surface liquid homeostasis, which is crucial for proper mucus clearance. The chain is Epithelial sodium channel subunit alpha from Rattus norvegicus (Rat).